A 92-amino-acid chain; its full sequence is Small ribosomal subunit protein uS19 (92 aa).

It belongs to the universal ribosomal protein uS19 family.

Its function is as follows. Protein S19 forms a complex with S13 that binds strongly to the 16S ribosomal RNA. This Trichormus variabilis (strain ATCC 29413 / PCC 7937) (Anabaena variabilis) protein is Small ribosomal subunit protein uS19.